The sequence spans 332 residues: Glycerol-3-phosphate dehydrogenase [NAD(P)+] (332 aa).

4 residues coordinate NADPH: serine 11, phenylalanine 12, lysine 32, and lysine 106. The sn-glycerol 3-phosphate site is built by lysine 106, glycine 137, and serine 139. Residue alanine 141 participates in NADPH binding. 5 residues coordinate sn-glycerol 3-phosphate: lysine 192, aspartate 245, serine 255, arginine 256, and asparagine 257. Lysine 192 (proton acceptor) is an active-site residue. Residue arginine 256 coordinates NADPH. 2 residues coordinate NADPH: valine 280 and glutamate 282.

The protein belongs to the NAD-dependent glycerol-3-phosphate dehydrogenase family.

It is found in the cytoplasm. The enzyme catalyses sn-glycerol 3-phosphate + NAD(+) = dihydroxyacetone phosphate + NADH + H(+). It carries out the reaction sn-glycerol 3-phosphate + NADP(+) = dihydroxyacetone phosphate + NADPH + H(+). It participates in membrane lipid metabolism; glycerophospholipid metabolism. In terms of biological role, catalyzes the reduction of the glycolytic intermediate dihydroxyacetone phosphate (DHAP) to sn-glycerol 3-phosphate (G3P), the key precursor for phospholipid synthesis. In Staphylococcus epidermidis (strain ATCC 35984 / DSM 28319 / BCRC 17069 / CCUG 31568 / BM 3577 / RP62A), this protein is Glycerol-3-phosphate dehydrogenase [NAD(P)+].